A 510-amino-acid polypeptide reads, in one-letter code: Archaeal glutamate synthase [NADPH] (510 aa).

4Fe-4S ferredoxin-type domains lie at Tyr10–Glu37 and Gly38–Asn68. Cys19, Cys22, Cys25, Cys29, Cys48, Cys51, Cys54, and Cys58 together coordinate [4Fe-4S] cluster.

It belongs to the glutamate synthase family. The cofactor is FMN.

The enzyme catalyses 2 L-glutamate + NADP(+) = L-glutamine + 2-oxoglutarate + NADPH + H(+). The chain is Archaeal glutamate synthase [NADPH] from Methanocaldococcus jannaschii (strain ATCC 43067 / DSM 2661 / JAL-1 / JCM 10045 / NBRC 100440) (Methanococcus jannaschii).